Here is a 589-residue protein sequence, read N- to C-terminus: ATP-dependent lipid A-core flippase (589 aa).

Transmembrane regions (helical) follow at residues 29–49 (LLLV…TGFL), 70–90 (WLPV…YITD), 157–177 (VIGA…TILV), 261–281 (MIGA…ALAG), and 283–303 (LTAG…PGLK). Positions 32-314 (VAALIAALIE…LTNVQNMVQR (283 aa)) constitute an ABC transmembrane type-1 domain. Residues 346 to 582 (IEFRDVTARY…GGLYSHLHGM (237 aa)) enclose the ABC transporter domain. 380–387 (GRSGSGKS) serves as a coordination point for ATP.

It belongs to the ABC transporter superfamily. Lipid exporter (TC 3.A.1.106) family. In terms of assembly, homodimer.

It is found in the cell inner membrane. The catalysed reaction is ATP + H2O + lipid A-core oligosaccharideSide 1 = ADP + phosphate + lipid A-core oligosaccharideSide 2.. In terms of biological role, involved in lipopolysaccharide (LPS) biosynthesis. Translocates lipid A-core from the inner to the outer leaflet of the inner membrane. Transmembrane domains (TMD) form a pore in the inner membrane and the ATP-binding domain (NBD) is responsible for energy generation. This Xanthomonas oryzae pv. oryzae (strain MAFF 311018) protein is ATP-dependent lipid A-core flippase.